The sequence spans 1253 residues: MKNLVTHLHHVFPNVNGSIKALAFNSISDKIYVVCGLDNENPGIEIYEISENDDVSKLVEFDSPSFVSDNGDIDEIQSMQFLGEPMAICLSLKGGDIVMVKVDPSPEEAPWEIIGNVENGIVASCWSTDEQVFCIITGGDTILFMTKNFDIISETSLSDADLNEFNKHISVGWGRSETQFRGKRVRAKLRDPTLPEKIDEGKLSDVDDGKTYICWRGDSQYVSINRLEKGPRRAIRVYSREGLLDSISEPQDGQQSLLSWKPSGSVLATIKSDSSDNSSKVIFFERNGLRHGEFSLRRREDEKYTGLAWNVSSSILAVSTENSVMLWTTGNYHWYLKKEINIPQNALISWHPEHANTLYITGKNHIEKVVFDLKYVTEFSTSPNDFGLIPVIDGSSLLVTPLSLCNIPPPMCRYKLSLDYNVQMTSINATSDMLFAADDRRLTAFTFNSQEDIAKFGEFDISTYAEGLNFKSLLGLSGNQVLLLADGTNNCSKFFVFQCDEDNESLKLLASESFESCILNASYCSEMLFFQTSSGKLISYNLNVKSIESISLSFPKPCSDFVVVPVHETFVPIGLTSYGRLYAEQRLLSTGVLSFFCTERFVLFTTTKNLLKFVHLVSTVDDLQVVEDDAVDRHDERCRVVERGSKIVASMPSKMAVVLQMPRGNLETIYPRIMVLDGVRTYIKALKYGDAFKVCRTHRLDLNILFDYDPDLFLKNIPVFVDGLYRVDYLDLFLTSLKPENVTTGMYSDTSKSQSQQSVTTIDNKVNLLCKIIREHLTSKYGDTHFQAIITSYLCESPPKIEAALGMISGLIKAQSETVDLAIEHMCFLVDVNMLFDHALGLYDLKLALLIAQQSQKDPREYVPFLHEFQKQESLRRKFNIDCYLKRYERALGHLKEMENAFDEFKNFTIQHKLYPRALELYKYDKEAQKEVLIIFAQYLRENGKSNEAAIAYESVGKISEAIEAYKSAGMWRECLSILQQTTNSEDLIRETAEDLASLCIEKREHCDAGSINLLYLSNPREAVIQMCKGSQYSEAIRIARATGDSSIYKDLLISVLGESFGEASELVADFRNQIKSQTERILVLREKKKEDPISWMEGTMEDQTPDDISLASTSLSTNRSLYTQYTKSSNSSKMTRNTSKNNRRLERKRARGKKGTVFEEEYLVNSLRRLIARVEEIRPEVHRLLEALVRCNMTTQASELQRNFANVIGTIGEKVIPILSVPVSTFETALGEQPQAPVVPNVKPFEKLSILI.

Residues valine 830–isoleucine 1253 are mediates dimerization. Over residues tyrosine 1126–lysine 1141 the composition is skewed to polar residues. Residues tyrosine 1126–glycine 1153 are disordered. A required for binding to tRNA region spans residues arginine 1137–lysine 1155. Positions asparagine 1142–glycine 1153 are enriched in basic residues.

This sequence belongs to the ELP1/IKA1 family. As to quaternary structure, homodimer. Component of the elongator complex.

Its subcellular location is the cytoplasm. Its pathway is tRNA modification; 5-methoxycarbonylmethyl-2-thiouridine-tRNA biosynthesis. Functionally, component of the elongator complex, a multiprotein complex which is required for multiple tRNA modifications, including mcm5U (5-methoxycarbonylmethyl uridine), mcm5s2U (5-methoxycarbonylmethyl-2-thiouridine), and ncm5U (5-carbamoylmethyl uridine). The elongator complex catalyzes formation of carboxymethyluridine in the wobble base at position 34 in tRNAs. ELP1 binds to tRNA, mediating interaction of the elongator complex with tRNA. In Schizosaccharomyces pombe (strain 972 / ATCC 24843) (Fission yeast), this protein is Elongator complex protein 1.